Here is a 1142-residue protein sequence, read N- to C-terminus: GPI inositol-deacylase (1142 aa).

A disordered region spans residues 24 to 59 (GFYKRNNANTASNDEKPNLEQNDIPSVTSSGSSTPS). Low complexity predominate over residues 47–59 (IPSVTSSGSSTPS). A helical membrane pass occupies residues 81–101 (SWSLYVAIIAILLLLVILHSF). The active site involves serine 264. N-linked (GlcNAc...) asparagine glycans are attached at residues asparagine 596 and asparagine 679. The next 4 membrane-spanning stretches (helical) occupy residues 741–761 (LLASFPVVVISLAAYNQFRYF), 781–801 (GLIKLLFLVSILSIAFSYLIS), 849–869 (LLTLMFVGLVITASVIILCVM), and 946–966 (IIGIMLLLLMAMTVVPFQLVY). Asparagine 1002 carries N-linked (GlcNAc...) asparagine glycosylation. The chain crosses the membrane as a helical span at residues 1006–1026 (TITILMLLLAPLDFPVLIVWA). A glycan (N-linked (GlcNAc...) asparagine) is linked at asparagine 1028. 3 helical membrane-spanning segments follow: residues 1035–1055 (IPFPTHHNFFSIIPFILLTEI), 1075–1095 (VFLFLLSFYSLIYGAEKPYLI), and 1097–1117 (NVVGLYFFWLLFLYAKNGFFV). The N-linked (GlcNAc...) asparagine glycan is linked to asparagine 1119.

It belongs to the GPI inositol-deacylase family.

Its subcellular location is the endoplasmic reticulum membrane. Its function is as follows. Involved in inositol deacylation of GPI-anchored proteins which plays important roles in the quality control and ER-associated degradation of GPI-anchored proteins. The polypeptide is GPI inositol-deacylase (bst1) (Schizosaccharomyces pombe (strain 972 / ATCC 24843) (Fission yeast)).